The chain runs to 258 residues: Trans-aconitate 2-methyltransferase (258 aa).

Belongs to the methyltransferase superfamily. Tam family.

It is found in the cytoplasm. It catalyses the reaction trans-aconitate + S-adenosyl-L-methionine = (E)-3-(methoxycarbonyl)pent-2-enedioate + S-adenosyl-L-homocysteine. Its function is as follows. Catalyzes the S-adenosylmethionine monomethyl esterification of trans-aconitate. The sequence is that of Trans-aconitate 2-methyltransferase from Yersinia pseudotuberculosis serotype O:1b (strain IP 31758).